A 303-amino-acid polypeptide reads, in one-letter code: Probable porphobilinogen deaminase (303 aa).

Cys-240 carries the S-(dipyrrolylmethanemethyl)cysteine modification.

It belongs to the HMBS family. It depends on dipyrromethane as a cofactor.

It catalyses the reaction 4 porphobilinogen + H2O = hydroxymethylbilane + 4 NH4(+). It participates in porphyrin-containing compound metabolism; protoporphyrin-IX biosynthesis; coproporphyrinogen-III from 5-aminolevulinate: step 2/4. Its function is as follows. Tetrapolymerization of the monopyrrole PBG into the hydroxymethylbilane pre-uroporphyrinogen in several discrete steps. This chain is Probable porphobilinogen deaminase, found in Hyperthermus butylicus (strain DSM 5456 / JCM 9403 / PLM1-5).